We begin with the raw amino-acid sequence, 338 residues long: MIAVLRINHRPFRDKRITTHVALTARAFGASSILVDEKDETLEQTINKVVENFGGNFFIKSGVDWKREFRNFKGIRVHLTMYGRPLEDVVKEIRESKKDVMILVGSEKVPFEAYEIADYNVSVTNQPISEVSALAIFLDRFYDGEELNWRFTGKINVYPSERGKKVKIIPDEQGCLDLLYKYGASDYLINHVKSVKELAVAIAKKTNADINLVTAGALLHDIGRTQVQGITHAVVGADILRREGIDDRVVSIVEKHIGAGIQSEEAVKLGLPPDNYVPETIEEMIVAHADNLFAGDKRLKLQQVVDNYRKKGLEDAAERIAKLHKFLSTVIGQDMDEI.

S-adenosyl-L-methionine is bound by residues Leu-79 and 105-109 (GSEKV). The 108-residue stretch at 188 to 295 (LINHVKSVKE…VAHADNLFAG (108 aa)) folds into the HD domain.

Belongs to the aTrm56 family. In terms of assembly, homodimer.

The protein localises to the cytoplasm. The catalysed reaction is cytidine(56) in tRNA + S-adenosyl-L-methionine = 2'-O-methylcytidine(56) in tRNA + S-adenosyl-L-homocysteine + H(+). In terms of biological role, specifically catalyzes the AdoMet-dependent 2'-O-ribose methylation of cytidine at position 56 in tRNAs. The polypeptide is tRNA (cytidine(56)-2'-O)-methyltransferase (Thermoplasma volcanium (strain ATCC 51530 / DSM 4299 / JCM 9571 / NBRC 15438 / GSS1)).